Reading from the N-terminus, the 94-residue chain is Large ribosomal subunit protein uL23 (94 aa).

This sequence belongs to the universal ribosomal protein uL23 family. In terms of assembly, part of the 50S ribosomal subunit. Contacts protein L29, and trigger factor when it is bound to the ribosome.

One of the early assembly proteins it binds 23S rRNA. One of the proteins that surrounds the polypeptide exit tunnel on the outside of the ribosome. Forms the main docking site for trigger factor binding to the ribosome. The polypeptide is Large ribosomal subunit protein uL23 (Roseiflexus sp. (strain RS-1)).